The chain runs to 131 residues: Large ribosomal subunit protein bL12 (131 aa).

This sequence belongs to the bacterial ribosomal protein bL12 family. As to quaternary structure, homodimer. Part of the ribosomal stalk of the 50S ribosomal subunit. Forms a multimeric L10(L12)X complex, where L10 forms an elongated spine to which 2 to 4 L12 dimers bind in a sequential fashion. Binds GTP-bound translation factors.

Its function is as follows. Forms part of the ribosomal stalk which helps the ribosome interact with GTP-bound translation factors. Is thus essential for accurate translation. In Prochlorococcus marinus (strain MIT 9313), this protein is Large ribosomal subunit protein bL12.